The following is a 31-amino-acid chain: Cytochrome b6-f complex subunit 6 (31 aa).

A helical membrane pass occupies residues 4–26 (ITSYFGFLLAALTITSALLIGLN).

This sequence belongs to the PetL family. The 4 large subunits of the cytochrome b6-f complex are cytochrome b6, subunit IV (17 kDa polypeptide, PetD), cytochrome f and the Rieske protein, while the 4 small subunits are PetG, PetL, PetM and PetN. The complex functions as a dimer.

Its subcellular location is the plastid. It localises to the chloroplast thylakoid membrane. In terms of biological role, component of the cytochrome b6-f complex, which mediates electron transfer between photosystem II (PSII) and photosystem I (PSI), cyclic electron flow around PSI, and state transitions. PetL is important for photoautotrophic growth as well as for electron transfer efficiency and stability of the cytochrome b6-f complex. The sequence is that of Cytochrome b6-f complex subunit 6 from Amborella trichopoda.